We begin with the raw amino-acid sequence, 294 residues long: HTH-type transcriptional regulator TcbR (294 aa).

One can recognise an HTH lysR-type domain in the interval 1–58 (MEFRQLKYFIAVAEAGNMAAAAKRLHVSQPPITRQMQALEADLGVVLLERSHRGIELT). A DNA-binding region (H-T-H motif) is located at residues 18-37 (MAAAAKRLHVSQPPITRQMQ).

Belongs to the LysR transcriptional regulatory family.

In terms of biological role, involved in regulation of chlorinated catechol metabolism. Transcriptional activator of the tcbCDEF chlorocatechol oxidative operon. May bind 2-chloromuconate as an inducer. The protein is HTH-type transcriptional regulator TcbR (tcbR) of Pseudomonas sp. (strain P51).